A 613-amino-acid chain; its full sequence is Nuclear receptor subfamily 1 group D member 1 (613 aa).

The span at 1-48 (MTTLDSNNNTGGVITYIGSSGSSPNRTSPESLYSDSSNGSFQSLTQGC) shows a compositional bias: polar residues. Residues 1–70 (MTTLDSNNNT…TQDPARSFGS (70 aa)) are required for phosphorylation by CSNK1E and cytoplasmic localization. The segment at 1–102 (MTTLDSNNNT…SSFYNGSPPG (102 aa)) is disordered. The interval 1 to 129 (MTTLDSNNNT…TSNITKLNGM (129 aa)) is modulating. Residues 49–285 (PTYFPPSPTG…PPRSPSPEPT (237 aa)) form a crucial for activation of GJA1 region. A phosphoserine; by GSK3-beta mark is found at serine 55 and serine 59. The span at 69 to 102 (GSIPPSLGDDGSPSSSSSSSSSSSSSFYNGSPPG) shows a compositional bias: low complexity. Residues 130–206 (VLLCKVCGDV…VGMSRDAVRF (77 aa)) constitute a DNA-binding region (nuclear receptor). 2 consecutive NR C4-type zinc fingers follow at residues 133–153 (CKVCGDVASGFHYGVHACEGC) and 170–194 (CLKNENCSIVRINRNRCQQCRFKKC). An N6-acetyllysine; by KAT5 mark is found at lysine 192 and lysine 193. A disordered region spans residues 233-286 (SSQCPLETPPTQHPTPGPMGPSPPPAPAPSPLVGFSQFPQQLTPPRSPSPEPTV). A compositionally biased stretch (pro residues) spans 239–262 (ETPPTQHPTPGPMGPSPPPAPAPS). Residue threonine 275 is modified to Phosphothreonine; by CDK1. An NR LBD domain is found at 285 to 613 (TVEDVISQVA…KLLSFRVDAQ (329 aa)). Heme is bound at residue cysteine 417. Lysine 590 bears the N6-acetyllysine mark. Histidine 601 serves as a coordination point for heme.

This sequence belongs to the nuclear hormone receptor family. NR1 subfamily. As to quaternary structure, binds DNA as a monomer or a homodimer. Interacts with C1D, SP1 and ZNHIT1. Interacts with OPHN1 (via C-terminus). Interacts with PER2; the interaction associates PER2 to BMAL1 promoter region. Interacts with CRY1. Interacts with CCAR2. Interacts with NR2E3. Interacts with SIAH2. Interacts with FBXW7 and CDK1. Interacts with HUWE1. Interacts with NR0B2. Interacts with NFIL3. Interacts (via domain NR LBD) with HSP90AA1 and HSP90AB1. In terms of processing, ubiquitinated, leading to its proteasomal degradation. Ubiquitinated by the SCF(FBXW7) complex when phosphorylated by CDK1 leading to its proteasomal degradation. Ubiquitinated by SIAH2; leading to its proteasomal degradation. Rapidly ubiquitinated in response to inflammatory triggers and sumoylation is a prerequisite to its ubiquitination. Post-translationally, sumoylated by UBE2I, desumoylated by SENP1, and sumoylation is a prerequisite to its ubiquitination. Phosphorylated by CSNK1E; phosphorylation enhances its cytoplasmic localization. In terms of processing, undergoes lysosome-mediated degradation in a time-dependent manner in the liver. Expressed in all tissues and cell lines examined. Expressed at high levels in some squamous carcinoma cell lines.

Its subcellular location is the nucleus. It is found in the cytoplasm. The protein resides in the cell projection. It localises to the dendrite. The protein localises to the dendritic spine. Transcriptional repressor which coordinates circadian rhythm and metabolic pathways in a heme-dependent manner. Integral component of the complex transcription machinery that governs circadian rhythmicity and forms a critical negative limb of the circadian clock by directly repressing the expression of core clock components BMAL1, CLOCK and CRY1. Also regulates genes involved in metabolic functions, including lipid and bile acid metabolism, adipogenesis, gluconeogenesis and the macrophage inflammatory response. Acts as a receptor for heme which stimulates its interaction with the NCOR1/HDAC3 corepressor complex, enhancing transcriptional repression. Recognizes two classes of DNA response elements within the promoter of its target genes and can bind to DNA as either monomers or homodimers, depending on the nature of the response element. Binds as a monomer to a response element composed of the consensus half-site motif 5'-[A/G]GGTCA-3' preceded by an A/T-rich 5' sequence (RevRE), or as a homodimer to a direct repeat of the core motif spaced by two nucleotides (RevDR-2). Acts as a potent competitive repressor of ROR alpha (RORA) function and regulates the levels of its ligand heme by repressing the expression of PPARGC1A, a potent inducer of heme synthesis. Regulates lipid metabolism by repressing the expression of APOC3 and by influencing the activity of sterol response element binding proteins (SREBPs); represses INSIG2 which interferes with the proteolytic activation of SREBPs which in turn govern the rhythmic expression of enzymes with key functions in sterol and fatty acid synthesis. Regulates gluconeogenesis via repression of G6PC1 and PEPCK and adipocyte differentiation via repression of PPARG. Regulates glucagon release in pancreatic alpha-cells via the AMPK-NAMPT-SIRT1 pathway and the proliferation, glucose-induced insulin secretion and expression of key lipogenic genes in pancreatic-beta cells. Positively regulates bile acid synthesis by increasing hepatic expression of CYP7A1 via repression of NR0B2 and NFIL3 which are negative regulators of CYP7A1. Modulates skeletal muscle oxidative capacity by regulating mitochondrial biogenesis and autophagy; controls mitochondrial biogenesis and respiration by interfering with the STK11-PRKAA1/2-SIRT1-PPARGC1A signaling pathway. Represses the expression of SERPINE1/PAI1, an important modulator of cardiovascular disease and the expression of inflammatory cytokines and chemokines in macrophages. Represses gene expression at a distance in macrophages by inhibiting the transcription of enhancer-derived RNAs (eRNAs). Plays a role in the circadian regulation of body temperature and negatively regulates thermogenic transcriptional programs in brown adipose tissue (BAT); imposes a circadian oscillation in BAT activity, increasing body temperature when awake and depressing thermogenesis during sleep. In concert with NR2E3, regulates transcriptional networks critical for photoreceptor development and function. In addition to its activity as a repressor, can also act as a transcriptional activator. In the ovarian granulosa cells acts as a transcriptional activator of STAR which plays a role in steroid biosynthesis. In collaboration with SP1, activates GJA1 transcription in a heme-independent manner. Represses the transcription of CYP2B10, CYP4A10 and CYP4A14. Represses the transcription of CES2. Represses and regulates the circadian expression of TSHB in a NCOR1-dependent manner. Negatively regulates the protein stability of NR3C1 and influences the time-dependent subcellular distribution of NR3C1, thereby affecting its transcriptional regulatory activity. Plays a critical role in the circadian control of neutrophilic inflammation in the lung; under resting, non-stress conditions, acts as a rhythmic repressor to limit inflammatory activity whereas in the presence of inflammatory triggers undergoes ubiquitin-mediated degradation thereby relieving inhibition of the inflammatory response. Plays a key role in the circadian regulation of microglial activation and neuroinflammation; suppresses microglial activation through the NF-kappaB pathway in the central nervous system. Plays a role in the regulation of the diurnal rhythms of lipid and protein metabolism in the skeletal muscle via transcriptional repression of genes controlling lipid and amino acid metabolism in the muscle. The chain is Nuclear receptor subfamily 1 group D member 1 (NR1D1) from Bos taurus (Bovine).